The sequence spans 481 residues: Cerebral cavernous malformations 2 protein-like (481 aa).

Disordered regions lie at residues 161–193 and 214–290; these read PVPA…GTAE and EARA…DPQN. Over residues 184-193 the composition is skewed to basic and acidic residues; that stretch reads PEKRRVGTAE. Residues 214–223 show a composition bias toward gly residues; sequence EARAAGGGGS. Positions 237 to 251 are enriched in basic and acidic residues; sequence WERRQTFSGSWERRH.

This sequence belongs to the CCM2 family.

The protein is Cerebral cavernous malformations 2 protein-like (Ccm2l) of Mus musculus (Mouse).